The sequence spans 1463 residues: Nitric oxide synthase 1 (1463 aa).

The tract at residues 1–200 (MESHMFSVQQ…LQGSGENNKL (200 aa)) is interaction with NOSIP. Residues 17-99 (SVRLFKRKVG…ETHVVLILRG (83 aa)) form the PDZ domain. Disordered stretches follow at residues 110–194 (TFTG…LQGS), 215–250 (GKAI…LPLG), and 268–298 (VVLN…SKCP). Residues 158–240 (PDPGQEASSL…VEVQVDRDPD (83 aa)) are DYNLL1/PIN/nNOS-inhibiting protein-binding. Residues 226-243 (TETKDVEVQVDRDPDSKS) show a composition bias toward basic and acidic residues. Polar residues predominate over residues 280–294 (PSASGKQSPTKNGSP). (6R)-L-erythro-5,6,7,8-tetrahydrobiopterin is bound at residue Ser334. Cys415 contributes to the heme b binding site. L-arginine-binding residues include Gln478, Trp587, Tyr588, and Glu592. (6R)-L-erythro-5,6,7,8-tetrahydrobiopterin-binding residues include Val677, Trp678, and Phe691. Residue Tyr706 participates in heme b binding. Residues 725–745 (KRRAIGFKKLAEAVKFSAKLM) form a calmodulin-binding region. A Flavodoxin-like domain is found at 755-969 (ATILYATETG…AFRTWAKKVF (215 aa)). FMN contacts are provided by Thr761, Glu762, Thr763, Lys765, Ser766, Ser807, Thr808, and Gly812. Phosphoserine occurs at positions 881, 891, and 892. The FMN site is built by Ser920, His925, Cys927, Glu953, and Gln957. In terms of domain architecture, FAD-binding FR-type spans 1024–1271 (KRVSAARLLS…VRGAPSFHLP (248 aa)). Arg1044 serves as a coordination point for NADP(+). FAD contacts are provided by His1066, Arg1207, Tyr1208, Tyr1209, Ser1210, Thr1225, and Ala1227. Position 1230 (Ser1230) interacts with NADP(+). Positions 1231, 1244, 1245, and 1246 each coordinate FAD. Residues Thr1285, Arg1318, Ser1347, Arg1348, Lys1354, Tyr1356, Gln1358, Asp1391, Thr1432, and Arg1434 each contribute to the NADP(+) site.

The protein belongs to the NOS family. In terms of assembly, homodimer. Interacts with DLG4; the interaction possibly being prevented by the association between NOS1 and CAPON. Forms a ternary complex with CAPON and RASD1. Forms a ternary complex with CAPON and SYN1. Interacts with ZDHHC23. Interacts with NOSIP; which may impair its synaptic location. Interacts with HTR4. Interacts with SLC6A4. Interacts with VAC14. Interacts (via N-terminal domain) with DLG4 (via N-terminal tandem pair of PDZ domains). Interacts with SLC6A4. Forms a complex with ASL, ASS1 and SLC7A1; the complex regulates cell-autonomous L-arginine synthesis and citrulline recycling while channeling extracellular L-arginine to nitric oxide synthesis pathway. Interacts with DMD; localizes NOS1 to sarcolemma in muscle cells. Interacts with DYNLL1; inhibits the nitric oxide synthase activity. Heme b is required as a cofactor. FAD serves as cofactor. It depends on FMN as a cofactor. Requires (6R)-L-erythro-5,6,7,8-tetrahydrobiopterin as cofactor. In terms of processing, ubiquitinated; mediated by STUB1/CHIP in the presence of Hsp70 and Hsp40 (in vitro).

The protein localises to the cell membrane. Its subcellular location is the sarcolemma. It localises to the cell projection. The protein resides in the dendritic spine. The catalysed reaction is 2 L-arginine + 3 NADPH + 4 O2 + H(+) = 2 L-citrulline + 2 nitric oxide + 3 NADP(+) + 4 H2O. Its activity is regulated as follows. Stimulated by calcium/calmodulin. Inhibited by DYNLL1 that prevents the dimerization of the protein. Inhibited by NOSIP. In terms of biological role, produces nitric oxide (NO) which is a messenger molecule with diverse functions throughout the body. In the brain and peripheral nervous system, NO displays many properties of a neurotransmitter. Probably has nitrosylase activity and mediates cysteine S-nitrosylation of cytoplasmic target proteins such SRR. The polypeptide is Nitric oxide synthase 1 (NOS1) (Ovis aries (Sheep)).